A 489-amino-acid polypeptide reads, in one-letter code: Cysteine--tRNA ligase (489 aa).

Residue C29 coordinates Zn(2+). A 'HIGH' region motif is present at residues V31 to H41. Positions 215, 240, and 244 each coordinate Zn(2+). Positions K272–S276 match the 'KMSKS' region motif. An ATP-binding site is contributed by K275.

This sequence belongs to the class-I aminoacyl-tRNA synthetase family. Monomer. It depends on Zn(2+) as a cofactor.

It localises to the cytoplasm. The catalysed reaction is tRNA(Cys) + L-cysteine + ATP = L-cysteinyl-tRNA(Cys) + AMP + diphosphate. This Trichodesmium erythraeum (strain IMS101) protein is Cysteine--tRNA ligase.